The sequence spans 286 residues: Bifunctional protein FolD (286 aa).

NADP(+) is bound by residues 165–167 (GRS), Ser190, and Val231.

Belongs to the tetrahydrofolate dehydrogenase/cyclohydrolase family. As to quaternary structure, homodimer.

It catalyses the reaction (6R)-5,10-methylene-5,6,7,8-tetrahydrofolate + NADP(+) = (6R)-5,10-methenyltetrahydrofolate + NADPH. The enzyme catalyses (6R)-5,10-methenyltetrahydrofolate + H2O = (6R)-10-formyltetrahydrofolate + H(+). Its pathway is one-carbon metabolism; tetrahydrofolate interconversion. Catalyzes the oxidation of 5,10-methylenetetrahydrofolate to 5,10-methenyltetrahydrofolate and then the hydrolysis of 5,10-methenyltetrahydrofolate to 10-formyltetrahydrofolate. In Bacillus anthracis (strain A0248), this protein is Bifunctional protein FolD.